The following is a 208-amino-acid chain: MSKLSKRQEEILAYIKDEVKKKGYPPSVREIGEAVGLASSSTVHGHLARLEKKGYIRRDPTKPRAIEVLSLGFDNDTFVKKETASFIPVIGKVTAGVPITAVENVEDYLPLPDHLAAYDNTYALVIQGESMIEAGIYDGDQVIVRQQQTADNGDIIVAMTEDNEATVKRFFREKDYIRLQPENSSMEPIILENCTILGKVIGVFRTIH.

A DNA-binding region (H-T-H motif) is located at residues 28–48 (VREIGEAVGLASSSTVHGHLA). Active-site for autocatalytic cleavage activity residues include serine 130 and lysine 168.

This sequence belongs to the peptidase S24 family. Homodimer.

The catalysed reaction is Hydrolysis of Ala-|-Gly bond in repressor LexA.. In terms of biological role, represses a number of genes involved in the response to DNA damage (SOS response), including recA and lexA. In the presence of single-stranded DNA, RecA interacts with LexA causing an autocatalytic cleavage which disrupts the DNA-binding part of LexA, leading to derepression of the SOS regulon and eventually DNA repair. The sequence is that of LexA repressor from Shouchella clausii (strain KSM-K16) (Alkalihalobacillus clausii).